A 181-amino-acid chain; its full sequence is Large ribosomal subunit protein uL6 (181 aa).

Belongs to the universal ribosomal protein uL6 family. In terms of assembly, part of the 50S ribosomal subunit.

In terms of biological role, this protein binds to the 23S rRNA, and is important in its secondary structure. It is located near the subunit interface in the base of the L7/L12 stalk, and near the tRNA binding site of the peptidyltransferase center. The polypeptide is Large ribosomal subunit protein uL6 (Phytoplasma mali (strain AT)).